A 224-amino-acid polypeptide reads, in one-letter code: UPF0758 protein Nmul_A2138 (224 aa).

An MPN domain is found at 102–224; it reads AMDSPGPVRA…TLSFAEQGLI (123 aa). His-173, His-175, and Asp-186 together coordinate Zn(2+). A JAMM motif motif is present at residues 173–186; it reads HNHPSGAAEPSHAD.

The protein belongs to the UPF0758 family.

The protein is UPF0758 protein Nmul_A2138 of Nitrosospira multiformis (strain ATCC 25196 / NCIMB 11849 / C 71).